The primary structure comprises 1213 residues: Formin (1213 aa).

5 disordered regions span residues 1 to 24 (MEGG…SEPD), 66 to 111 (QANN…EPEP), 144 to 169 (VHTT…TSKC), 183 to 216 (GNNQ…PISQ), and 357 to 489 (DVSK…PKAN). 2 stretches are compositionally biased toward basic and acidic residues: residues 187–210 (SKEE…DTEL) and 431–464 (EAIK…DKSP). 2 coiled-coil regions span residues 428-450 (SELE…VFER) and 503-572 (EYQA…IGVS). The tract at residues 624–774 (ISTQGENKDS…PRKPAIEPSR (151 aa)) is disordered. The span at 636 to 647 (VPSSESVLSCQP) shows a compositional bias: polar residues. Composition is skewed to pro residues over residues 650–672 (MLPP…PPPF), 680–689 (LVPPPPPLPT), and 718–751 (PAPP…PPGP). An FH1 domain is found at 652–751 (PPSPPPPPPP…LPPPPPPPGP (100 aa)). Positions 755-764 (FNSTLSSSQG) are enriched in polar residues. The FH2 domain maps to 766-1182 (RKPAIEPSRP…KVAQQSVSKL (417 aa)). Positions 1050-1125 (FQASQVKFED…ENAQKCFEET (76 aa)) form a coiled coil. The tract at residues 1193–1213 (INPTASLKERLRQKEANVNAN) is disordered.

The protein belongs to the formin homology family. Cappuccino subfamily. Present in the adult brain, kidney, brain, heart and intestine and throughout the embryo.

It localises to the nucleus. Functionally, is important for morphogenesis of limb and kidney and may be involved in determining dorsoventral neural tube polarity and motor neuron induction. It may also have a function in differentiated cells or be involved in maintaining specific differentiated states. This Gallus gallus (Chicken) protein is Formin (LD).